The primary structure comprises 215 residues: MRVKHKKWAVPLMEAHPEMMTMDPASFKGRWQERFAKPQPLQVEVGMGKGQFIIGMAKAHPEINFIGLEIESTVAAIALKNALPEQLPNLTLVRGDGAGLDTYFEDGSIDRLYLNFSDPWPKTRHEKRRLTYKTFLANYQQVVKPGGGLEFKTDNQGLFEYSLTSLNNFGMIFDGVWLNLHESPENEGNVETEYEQRFASLGQPIYKLKAHFPVN.

S-adenosyl-L-methionine contacts are provided by Glu-44, Glu-69, Asp-96, and Asp-118. The active site involves Asp-118. Lys-122 serves as a coordination point for substrate. An interaction with RNA region spans residues 124–129 (RHEKRR). Substrate is bound by residues Asp-154 and 192–195 (TEYE).

The protein belongs to the class I-like SAM-binding methyltransferase superfamily. TrmB family.

It carries out the reaction guanosine(46) in tRNA + S-adenosyl-L-methionine = N(7)-methylguanosine(46) in tRNA + S-adenosyl-L-homocysteine. Its pathway is tRNA modification; N(7)-methylguanine-tRNA biosynthesis. In terms of biological role, catalyzes the formation of N(7)-methylguanine at position 46 (m7G46) in tRNA. The polypeptide is tRNA (guanine-N(7)-)-methyltransferase (Limosilactobacillus fermentum (strain NBRC 3956 / LMG 18251) (Lactobacillus fermentum)).